The following is a 109-amino-acid chain: Putative double-stranded DNA mimic protein CKO_01325 (109 aa).

It belongs to the putative dsDNA mimic protein family.

May act as a double-stranded DNA (dsDNA) mimic. Probably regulates the activity of a dsDNA-binding protein. The sequence is that of Putative double-stranded DNA mimic protein CKO_01325 from Citrobacter koseri (strain ATCC BAA-895 / CDC 4225-83 / SGSC4696).